The following is a 245-amino-acid chain: tRNA (guanine-N(1)-)-methyltransferase (245 aa).

S-adenosyl-L-methionine is bound by residues Gly111 and 131–136 (IGDYVL).

It belongs to the RNA methyltransferase TrmD family. Homodimer.

The protein localises to the cytoplasm. It carries out the reaction guanosine(37) in tRNA + S-adenosyl-L-methionine = N(1)-methylguanosine(37) in tRNA + S-adenosyl-L-homocysteine + H(+). Its function is as follows. Specifically methylates guanosine-37 in various tRNAs. The polypeptide is tRNA (guanine-N(1)-)-methyltransferase (Staphylococcus haemolyticus (strain JCSC1435)).